Reading from the N-terminus, the 340-residue chain is UDP-3-O-(3-hydroxymyristoyl)glucosamine N-acyltransferase (340 aa).

Residue H239 is the Proton acceptor of the active site.

Belongs to the transferase hexapeptide repeat family. LpxD subfamily. In terms of assembly, homotrimer.

It catalyses the reaction a UDP-3-O-[(3R)-3-hydroxyacyl]-alpha-D-glucosamine + a (3R)-hydroxyacyl-[ACP] = a UDP-2-N,3-O-bis[(3R)-3-hydroxyacyl]-alpha-D-glucosamine + holo-[ACP] + H(+). The enzyme catalyses UDP-3-O-[(3R)-3-hydroxytetradecanoyl]-alpha-D-glucosamine + (3R)-hydroxytetradecanoyl-[ACP] = UDP-2-N,3-O-bis[(3R)-3-hydroxytetradecanoyl]-alpha-D-glucosamine + holo-[ACP] + H(+). The protein operates within glycolipid biosynthesis; lipid IV(A) biosynthesis; lipid IV(A) from (3R)-3-hydroxytetradecanoyl-[acyl-carrier-protein] and UDP-N-acetyl-alpha-D-glucosamine: step 3/6. Catalyzes the N-acylation of UDP-3-O-(hydroxytetradecanoyl)glucosamine using 3-hydroxytetradecanoyl-ACP as the acyl donor. Is involved in the biosynthesis of lipid A, a phosphorylated glycolipid that anchors the lipopolysaccharide to the outer membrane of the cell. The chain is UDP-3-O-(3-hydroxymyristoyl)glucosamine N-acyltransferase from Pectobacterium atrosepticum (strain SCRI 1043 / ATCC BAA-672) (Erwinia carotovora subsp. atroseptica).